The primary structure comprises 361 residues: Phosphoserine aminotransferase (361 aa).

Serine 9 and arginine 42 together coordinate L-glutamate. Pyridoxal 5'-phosphate is bound by residues 76 to 77 (AR), tryptophan 102, threonine 153, aspartate 173, and glutamine 196. The residue at position 197 (lysine 197) is an N6-(pyridoxal phosphate)lysine. 238–239 (NT) serves as a coordination point for pyridoxal 5'-phosphate.

The protein belongs to the class-V pyridoxal-phosphate-dependent aminotransferase family. SerC subfamily. As to quaternary structure, homodimer. Requires pyridoxal 5'-phosphate as cofactor.

The protein resides in the cytoplasm. It catalyses the reaction O-phospho-L-serine + 2-oxoglutarate = 3-phosphooxypyruvate + L-glutamate. It carries out the reaction 4-(phosphooxy)-L-threonine + 2-oxoglutarate = (R)-3-hydroxy-2-oxo-4-phosphooxybutanoate + L-glutamate. The protein operates within amino-acid biosynthesis; L-serine biosynthesis; L-serine from 3-phospho-D-glycerate: step 2/3. It participates in cofactor biosynthesis; pyridoxine 5'-phosphate biosynthesis; pyridoxine 5'-phosphate from D-erythrose 4-phosphate: step 3/5. Its function is as follows. Catalyzes the reversible conversion of 3-phosphohydroxypyruvate to phosphoserine and of 3-hydroxy-2-oxo-4-phosphonooxybutanoate to phosphohydroxythreonine. This Erwinia tasmaniensis (strain DSM 17950 / CFBP 7177 / CIP 109463 / NCPPB 4357 / Et1/99) protein is Phosphoserine aminotransferase.